The primary structure comprises 1047 residues: Probable phospholipid-transporting ATPase IIA (1047 aa).

Threonine 2 is modified (N-acetylthreonine). Residues 2–69 (TDNIPLQPVR…NQKYNFFTFL (68 aa)) are Cytoplasmic-facing. Residues 70–91 (PGVLFNQFKYFFNLYFLLLACS) traverse the membrane as a helical segment. Over 92-96 (QFVPE) the chain is Extracellular. The helical transmembrane segment at 97 to 119 (MRLGALYTYWVPLGFVLAVTVIR) threads the bilayer. Residues 120-303 (EAVEEIRCYV…GLFDLEVNCL (184 aa)) are Cytoplasmic-facing. A helical transmembrane segment spans residues 304–325 (TKILFGALVVVSLVMVALQHFA). Residues 326–332 (GRWYLQI) lie on the Extracellular side of the membrane. The helical transmembrane segment at 333–354 (IRFLLLFSNIIPISLRVNLDMG) threads the bilayer. Residues 355–841 (KIVYSWVIRR…GRNSYKRSAA (487 aa)) are Cytoplasmic-facing. Aspartate 391 serves as the catalytic 4-aspartylphosphate intermediate. Positions 391, 392, 393, 502, 544, 549, 568, 597, 677, 678, 679, 759, and 765 each coordinate ATP. A Mg(2+)-binding site is contributed by aspartate 391. Threonine 393 is a Mg(2+) binding site. Aspartate 785 contributes to the Mg(2+) binding site. ATP-binding residues include asparagine 788 and aspartate 789. Aspartate 789 is a binding site for Mg(2+). A helical transmembrane segment spans residues 842–862 (LSQFVIHRSLCISTMQAVFSS). Residues 863 to 874 (VFYFASVPLYQG) lie on the Extracellular side of the membrane. Residues 875–893 (FLIIGYSTIYTMFPVFSLV) traverse the membrane as a helical segment. The Cytoplasmic portion of the chain corresponds to 894–923 (LDKDVKSEVAMLYPELYKDLLKGRPLSYKT). A helical transmembrane segment spans residues 924-942 (FLIWVLISIYQGSTIMYGA). Topologically, residues 943-949 (LLLFESE) are extracellular. A helical transmembrane segment spans residues 950–972 (FVHIVAISFTSLILTELLMVALT). The Cytoplasmic portion of the chain corresponds to 973–978 (IQTWHW). The helical transmembrane segment at 979–999 (LMTVAELLSLACYIASLVFLH) threads the bilayer. Residues 1000–1006 (EFIDVYF) are Extracellular-facing. A helical membrane pass occupies residues 1007–1030 (IATLSFLWKVSVITLVSCLPLYVL). Over 1031–1047 (KYLRRRFSPPSYSKLTS) the chain is Cytoplasmic.

Belongs to the cation transport ATPase (P-type) (TC 3.A.3) family. Type IV subfamily. Heterotrimer with MON2 and DOP1B; this complex regulates SNX3-retromer mediated endosomal sorting of WLS. Interacts with RAB5A and RAB11A. It depends on Mg(2+) as a cofactor.

Its subcellular location is the early endosome membrane. The protein resides in the recycling endosome membrane. It is found in the late endosome membrane. It localises to the golgi apparatus. The protein localises to the trans-Golgi network membrane. Its subcellular location is the cell membrane. It carries out the reaction ATP + H2O + phospholipidSide 1 = ADP + phosphate + phospholipidSide 2.. In terms of biological role, plays a role in regulating membrane trafficking of cargo proteins, namely endosome to plasma membrane recycling, probably acting through RAB5 and RAB11 activation. Also involved in endosome to trans-Golgi network retrograde transport. In complex with MON2 and DOP1B, regulates SNX3 retromer-mediated endosomal sorting of WLS, a transporter of Wnt morphogens in developing tissues. Participates in the formation of endosomal carriers that direct WLS trafficking back to Golgi, away from lysosomal degradation. Appears to be implicated in intercellular communication by negatively regulating the release of exosomes. The flippase activity towards membrane lipids and its role in membrane asymmetry remains to be proved. Required for the maintenance of neurite morphology and synaptic transmission. This Homo sapiens (Human) protein is Probable phospholipid-transporting ATPase IIA.